We begin with the raw amino-acid sequence, 440 residues long: Serine hydroxymethyltransferase (440 aa).

A (6S)-5,6,7,8-tetrahydrofolate-binding site is contributed by 123–125 (GHI). Position 238 is an N6-(pyridoxal phosphate)lysine (Lys238).

This sequence belongs to the SHMT family. Homodimer. The cofactor is pyridoxal 5'-phosphate.

The protein resides in the cytoplasm. The protein operates within amino-acid biosynthesis; glycine biosynthesis; glycine from L-serine: step 1/1. Catalyzes the reversible interconversion of serine and glycine with a modified folate serving as the one-carbon carrier. Also exhibits a pteridine-independent aldolase activity toward beta-hydroxyamino acids, producing glycine and aldehydes, via a retro-aldol mechanism. This chain is Serine hydroxymethyltransferase, found in Nitrosopumilus maritimus (strain SCM1).